The sequence spans 354 residues: DNA polymerase IV (354 aa).

One can recognise a UmuC domain in the interval 14–198; sequence IIHIDMDAFF…MDIAKFHGVG (185 aa). Mg(2+) contacts are provided by Asp18 and Asp116. Glu117 is a catalytic residue.

Belongs to the DNA polymerase type-Y family. In terms of assembly, monomer. Requires Mg(2+) as cofactor.

It is found in the cytoplasm. It carries out the reaction DNA(n) + a 2'-deoxyribonucleoside 5'-triphosphate = DNA(n+1) + diphosphate. Its function is as follows. Poorly processive, error-prone DNA polymerase involved in untargeted mutagenesis. Copies undamaged DNA at stalled replication forks, which arise in vivo from mismatched or misaligned primer ends. These misaligned primers can be extended by PolIV. Exhibits no 3'-5' exonuclease (proofreading) activity. May be involved in translesional synthesis, in conjunction with the beta clamp from PolIII. The protein is DNA polymerase IV of Streptococcus sanguinis (strain SK36).